Consider the following 262-residue polypeptide: Ubiquitin thioesterase otubain-like (262 aa).

Residues 64-262 (KFIRRTRPDG…PGHYDILYPN (199 aa)) form the OTU domain. Aspartate 72 is a catalytic residue. Catalysis depends on cysteine 75, which acts as the Nucleophile. A substrate-binding site is contributed by isoleucine 168. Histidine 255 is an active-site residue.

Belongs to the peptidase C65 family.

The enzyme catalyses Thiol-dependent hydrolysis of ester, thioester, amide, peptide and isopeptide bonds formed by the C-terminal Gly of ubiquitin (a 76-residue protein attached to proteins as an intracellular targeting signal).. In terms of biological role, possible hydrolase that can remove conjugated ubiquitin from proteins in vitro and may therefore play an important regulatory role at the level of protein turnover by preventing degradation. This is Ubiquitin thioesterase otubain-like from Drosophila melanogaster (Fruit fly).